A 1726-amino-acid chain; its full sequence is Gag-Pro-Pol polyprotein (1726 aa).

Glycine 2 is lipidated: N-myristoyl glycine; by host. The disordered stretch occupies residues 103-148; the sequence is LKQEEDPLHTPDSVPSYDPPPPPPPSLKMHPSDNDDSLSSTDEAEL. Positions 119–128 are enriched in pro residues; that stretch reads YDPPPPPPPS. Positions 202–205 match the PTAP/PSAP motif motif; it reads PSAP. A PPXY motif motif is present at residues 208–211; it reads PPAY. The PTAP/PSAP motif motif lies at 287 to 290; that stretch reads PTAP. A CCHC-type zinc finger spans residues 507-524; the sequence is SGCFVCGQPGHRAAVCPQ. Positions 550-570 are disordered; the sequence is RSKTDVQGNPLPPVSGNLGEG. A Peptidase A2 domain is found at 734-810; it reads FRGVLDTGAD…LPVNLWGRDI (77 aa). The active-site Protease; shared with dimeric partner is the aspartate 739. One can recognise a G-patch domain in the interval 821–866; that stretch reads PSPTVTDLMLDQGLLPNQGLGKQHQGIILPLDLKPNQDRKGLGCFP. One can recognise a Reverse transcriptase domain in the interval 911-1099; sequence LRLGHIEPST…FPYNYLGFSL (189 aa). Residues aspartate 976, aspartate 1051, aspartate 1052, aspartate 1322, glutamate 1351, aspartate 1371, and aspartate 1436 each contribute to the Mg(2+) site. Residues 1313 to 1444 enclose the RNase H type-1 domain; sequence IPEATLIFTD…ADVLTKQVFF (132 aa). The Integrase-type zinc finger occupies 1446–1487; sequence SAIDAARKSHDLHHQNSHSLRLQFKISREAARQIVKSCSTCP. Histidine 1455, histidine 1459, cysteine 1483, and cysteine 1486 together coordinate Zn(2+). The Integrase catalytic domain maps to 1500-1659; that stretch reads RGLRPNHLWQ…SAAQRFWGER (160 aa). Mg(2+)-binding residues include aspartate 1511, aspartate 1568, and glutamate 1604. Residues 1665-1714 constitute a DNA-binding region (integrase-type); sequence PLVRWKDPLTNLWYGPDPVLIWGRGHVCVFPQDAEAPRWIPERLVRAAEE.

This sequence belongs to the retroviral Pol polyprotein family. As to quaternary structure, homodimer. Interacts with the G-patch peptide. In terms of assembly, interacts with the reverse transcriptase/ribonuclease H. As to quaternary structure, homotrimer. The cofactor is Mg(2+). Post-translationally, released by autocatalytic processing. The protease can undergo further autoprocessing to yield 2 shorter but enzymatically active forms of 12 kDa and 13 kDa. In terms of processing, myristoylated. Myristoylation of the matrix (MA) domain mediates the transport and binding of Gag polyproteins to the host plasma membrane and is required for the assembly of viral particles. Specific enzymatic cleavages in vivo yield mature proteins.

The protein resides in the virion. The catalysed reaction is DNA(n) + a 2'-deoxyribonucleoside 5'-triphosphate = DNA(n+1) + diphosphate. It catalyses the reaction Endonucleolytic cleavage to 5'-phosphomonoester.. It carries out the reaction dUTP + H2O = dUMP + diphosphate + H(+). In terms of biological role, matrix protein. Functionally, nucleocapsid protein p14: Nucleocapsid protein. Capsid protein. Its function is as follows. The aspartyl protease mediates proteolytic cleavages of Gag and Gag-Pol polyproteins during or shortly after the release of the virion from the plasma membrane. Cleavages take place as an ordered, step-wise cascade to yield mature proteins. This process is called maturation. Displays maximal activity during the budding process just prior to particle release from the cell. In terms of biological role, enhances the activity of the reverse transcriptase. May be part of the mature RT. Functionally, RT is a multifunctional enzyme that converts the viral dimeric RNA genome into dsDNA in the cytoplasm, shortly after virus entry into the cell. This enzyme displays a DNA polymerase activity that can copy either DNA or RNA templates, and a ribonuclease H (RNase H) activity that cleaves the RNA strand of RNA-DNA heteroduplexes in a partially processive 3' to 5' endonucleasic mode. Conversion of viral genomic RNA into dsDNA requires many steps. A tRNA binds to the primer-binding site (PBS) situated at the 5' end of the viral RNA. RT uses the 3' end of the tRNA primer to perfom a short round of RNA-dependent minus-strand DNA synthesis. The reading proceeds through the U5 region and ends after the repeated (R) region which is present at both ends of viral RNA. The portion of the RNA-DNA heteroduplex is digested by the RNase H, resulting in a ssDNA product attached to the tRNA primer. This ssDNA/tRNA hybridizes with the identical R region situated at the 3' end of viral RNA. This template exchange, known as minus-strand DNA strong stop transfer, can be either intra- or intermolecular. RT uses the 3' end of this newly synthesized short ssDNA to perfom the RNA-dependent minus-strand DNA synthesis of the whole template. RNase H digests the RNA template except for a polypurine tract (PPT) situated at the 5' end of the genome. It is not clear if both polymerase and RNase H activities are simultaneous. RNase H probably can proceed both in a polymerase-dependent (RNA cut into small fragments by the same RT performing DNA synthesis) and a polymerase-independent mode (cleavage of remaining RNA fragments by free RTs). Secondly, RT performs DNA-directed plus-strand DNA synthesis using the PPT that has not been removed by RNase H as primers. PPT and tRNA primers are then removed by RNase H. The 3' and 5' ssDNA PBS regions hybridize to form a circular dsDNA intermediate. Strand displacement synthesis by RT to the PBS and PPT ends produces a blunt ended, linear dsDNA copy of the viral genome that includes long terminal repeats (LTRs) at both ends. Catalyzes viral DNA integration into the host chromosome, by performing a series of DNA cutting and joining reactions. The sequence is that of Gag-Pro-Pol polyprotein (pol) from Ovis aries (Sheep).